We begin with the raw amino-acid sequence, 418 residues long: Sprouty-related, EVH1 domain-containing protein 2 (418 aa).

Residues 5–122 enclose the WH1 domain; it reads THPDDDSYIV…RGVRKAIEDL (118 aa). A disordered region spans residues 127–172; sequence TTSSSTIHNEAELGDDDVFTTATDSSSNSSQKREQPTRTVSSPTSC. Residues 146–156 show a composition bias toward polar residues; it reads TTATDSSSNSS. A KBD domain is found at 201–257; the sequence is PYRQVSFPDDDEEIVRINPREKIWMTGYEDYRHAPVRGKYPDPSEDVDSSYVRFAKG. Ser-206 carries the post-translational modification Phosphoserine. Phosphotyrosine is present on residues Tyr-228 and Tyr-231. Positions 275–302 are disordered; that stretch reads GLGEDPKGRGGSVIKTQPSRGKSRRRKE. Residues 308 to 416 enclose the SPR domain; the sequence is RCVYCRDMFN…CRCCGGKHKA (109 aa).

Homodimer and heterodimer. Able to interact with SPRED1 to form heterodimers. Interacts with RAS. May interact with ZDHHC13 (via ANK repeats) and ZDHHC17 (via ANK repeats). Interacts with TESK1. Interacts with NF1. Phosphorylated on serine and threonine residues. Phosphorylated on tyrosine. Phosphorylation of Tyr-228 and Tyr-231 are required for ubiquitination. In terms of processing, ubiquitinated; leading to degradation by the proteasome.

The protein resides in the cell membrane. It is found in the cytoplasmic vesicle. It localises to the secretory vesicle membrane. The protein localises to the cytoplasm. Its function is as follows. Negatively regulates Ras signaling pathways and downstream activation of MAP kinases. Recruits and translocates NF1 to the cell membrane, thereby enabling NF1-dependent hydrolysis of active GTP-bound Ras to inactive GDP-bound Ras. Inhibits fibroblast growth factor (FGF)-induced retinal lens fiber differentiation, probably by inhibiting FGF-mediated phosphorylation of ERK1/2. Inhibits TGFB-induced epithelial-to-mesenchymal transition in lens epithelial cells. The sequence is that of Sprouty-related, EVH1 domain-containing protein 2 (SPRED2) from Pongo abelii (Sumatran orangutan).